The following is a 522-amino-acid chain: Protein nucleotidyltransferase YdiU (522 aa).

Positions 101, 103, 104, 123, 135, 136, 193, and 200 each coordinate ATP. The Proton acceptor role is filled by Asp270. Mg(2+)-binding residues include Asn271 and Asp280. Residue Asp280 participates in ATP binding.

The protein belongs to the SELO family. Mg(2+) is required as a cofactor. Requires Mn(2+) as cofactor.

It carries out the reaction L-seryl-[protein] + ATP = 3-O-(5'-adenylyl)-L-seryl-[protein] + diphosphate. It catalyses the reaction L-threonyl-[protein] + ATP = 3-O-(5'-adenylyl)-L-threonyl-[protein] + diphosphate. The enzyme catalyses L-tyrosyl-[protein] + ATP = O-(5'-adenylyl)-L-tyrosyl-[protein] + diphosphate. The catalysed reaction is L-histidyl-[protein] + UTP = N(tele)-(5'-uridylyl)-L-histidyl-[protein] + diphosphate. It carries out the reaction L-seryl-[protein] + UTP = O-(5'-uridylyl)-L-seryl-[protein] + diphosphate. It catalyses the reaction L-tyrosyl-[protein] + UTP = O-(5'-uridylyl)-L-tyrosyl-[protein] + diphosphate. Nucleotidyltransferase involved in the post-translational modification of proteins. It can catalyze the addition of adenosine monophosphate (AMP) or uridine monophosphate (UMP) to a protein, resulting in modifications known as AMPylation and UMPylation. The chain is Protein nucleotidyltransferase YdiU from Flavobacterium johnsoniae (strain ATCC 17061 / DSM 2064 / JCM 8514 / BCRC 14874 / CCUG 350202 / NBRC 14942 / NCIMB 11054 / UW101) (Cytophaga johnsonae).